The primary structure comprises 294 residues: Extracellular metalloprotease TRV_07111 (294 aa).

An N-terminal signal peptide occupies residues 1-19; the sequence is MRFSVVFAAIAALSSVVTA. 3 N-linked (GlcNAc...) asparagine glycosylation sites follow: N49, N54, and N74. H185 is a Zn(2+) binding site. The active site involves E186. H189 lines the Zn(2+) pocket. A disulfide bridge connects residues C224 and C250.

Belongs to the peptidase M43B family.

The protein resides in the secreted. In terms of biological role, secreted metalloproteinase that allows assimilation of proteinaceous substrates. Plays a pivotal role as a pathogenicity determinant during infections and contributes to the ability of the pathogen to persist within the mammalian host. This chain is Extracellular metalloprotease TRV_07111, found in Trichophyton verrucosum (strain HKI 0517).